Consider the following 394-residue polypeptide: Exodeoxyribonuclease 7 large subunit (394 aa).

It belongs to the XseA family. As to quaternary structure, heterooligomer composed of large and small subunits.

The protein resides in the cytoplasm. It carries out the reaction Exonucleolytic cleavage in either 5'- to 3'- or 3'- to 5'-direction to yield nucleoside 5'-phosphates.. Functionally, bidirectionally degrades single-stranded DNA into large acid-insoluble oligonucleotides, which are then degraded further into small acid-soluble oligonucleotides. The polypeptide is Exodeoxyribonuclease 7 large subunit (Thermotoga petrophila (strain ATCC BAA-488 / DSM 13995 / JCM 10881 / RKU-1)).